A 317-amino-acid polypeptide reads, in one-letter code: uncharacterized protein (317 aa).

A helical membrane pass occupies residues 11–31 (ALLLVIFGSLIVSFAIFFMVL). PASTA domains follow at residues 33–100 (NNEI…FISK), 101–174 (GAII…LISK), and 180–241 (DKHV…TIAK).

It is found in the membrane. This is an uncharacterized protein from Borreliella burgdorferi (strain ATCC 35210 / DSM 4680 / CIP 102532 / B31) (Borrelia burgdorferi).